The sequence spans 45 residues: MATETATLVTTFLSRSLVSFTGYALYTAFGKPSKELRDPFEEHED.

A helical transmembrane segment spans residues 12 to 30 (FLSRSLVSFTGYALYTAFG).

Belongs to the PsbN family.

The protein localises to the plastid. It localises to the chloroplast thylakoid membrane. May play a role in photosystem I and II biogenesis. The polypeptide is Protein PsbN (Adiantum capillus-veneris (Maidenhair fern)).